Here is a 259-residue protein sequence, read N- to C-terminus: Flap endonuclease Xni (259 aa).

Position 109 (Asp-109) interacts with Mg(2+). Residues 165-255 (VKPQQLSDYW…FNLQDLRFTA (91 aa)) enclose the 5'-3' exonuclease domain. Residues Leu-176, Ile-187, and Ile-190 each contribute to the K(+) site. Residues 189 to 194 (GIGPKA) are interaction with DNA.

Belongs to the Xni family. Mg(2+) is required as a cofactor. It depends on K(+) as a cofactor.

Has flap endonuclease activity. During DNA replication, flap endonucleases cleave the 5'-overhanging flap structure that is generated by displacement synthesis when DNA polymerase encounters the 5'-end of a downstream Okazaki fragment. The sequence is that of Flap endonuclease Xni from Vibrio vulnificus (strain YJ016).